Reading from the N-terminus, the 224-residue chain is UPF0758 protein NE1464 (224 aa).

An MPN domain is found at 102-224 (IMDSPQSVRN…VVSFAERGLI (123 aa)). Positions 173, 175, and 186 each coordinate Zn(2+). The JAMM motif signature appears at 173 to 186 (HNHPSGIAEPSTAD).

Belongs to the UPF0758 family.

The chain is UPF0758 protein NE1464 from Nitrosomonas europaea (strain ATCC 19718 / CIP 103999 / KCTC 2705 / NBRC 14298).